The primary structure comprises 103 residues: Small ribosomal subunit protein uS10 (103 aa).

This sequence belongs to the universal ribosomal protein uS10 family. In terms of assembly, part of the 30S ribosomal subunit.

In terms of biological role, involved in the binding of tRNA to the ribosomes. The protein is Small ribosomal subunit protein uS10 of Dechloromonas aromatica (strain RCB).